Here is a 430-residue protein sequence, read N- to C-terminus: Gamma-glutamyl phosphate reductase (430 aa).

Belongs to the gamma-glutamyl phosphate reductase family.

It is found in the cytoplasm. The catalysed reaction is L-glutamate 5-semialdehyde + phosphate + NADP(+) = L-glutamyl 5-phosphate + NADPH + H(+). It participates in amino-acid biosynthesis; L-proline biosynthesis; L-glutamate 5-semialdehyde from L-glutamate: step 2/2. Catalyzes the NADPH-dependent reduction of L-glutamate 5-phosphate into L-glutamate 5-semialdehyde and phosphate. The product spontaneously undergoes cyclization to form 1-pyrroline-5-carboxylate. This chain is Gamma-glutamyl phosphate reductase, found in Rhodopseudomonas palustris (strain BisB5).